Reading from the N-terminus, the 315-residue chain is 4-hydroxy-3-methylbut-2-enyl diphosphate reductase (315 aa).

Cysteine 12 is a [4Fe-4S] cluster binding site. 2 residues coordinate (2E)-4-hydroxy-3-methylbut-2-enyl diphosphate: histidine 41 and histidine 74. Dimethylallyl diphosphate is bound by residues histidine 41 and histidine 74. 2 residues coordinate isopentenyl diphosphate: histidine 41 and histidine 74. Cysteine 96 is a [4Fe-4S] cluster binding site. Histidine 124 provides a ligand contact to (2E)-4-hydroxy-3-methylbut-2-enyl diphosphate. Dimethylallyl diphosphate is bound at residue histidine 124. An isopentenyl diphosphate-binding site is contributed by histidine 124. Residue glutamate 126 is the Proton donor of the active site. Threonine 168 contacts (2E)-4-hydroxy-3-methylbut-2-enyl diphosphate. Cysteine 198 lines the [4Fe-4S] cluster pocket. (2E)-4-hydroxy-3-methylbut-2-enyl diphosphate contacts are provided by serine 226, serine 227, asparagine 228, and serine 270. The dimethylallyl diphosphate site is built by serine 226, serine 227, asparagine 228, and serine 270. Residues serine 226, serine 227, asparagine 228, and serine 270 each contribute to the isopentenyl diphosphate site.

The protein belongs to the IspH family. [4Fe-4S] cluster is required as a cofactor.

The enzyme catalyses isopentenyl diphosphate + 2 oxidized [2Fe-2S]-[ferredoxin] + H2O = (2E)-4-hydroxy-3-methylbut-2-enyl diphosphate + 2 reduced [2Fe-2S]-[ferredoxin] + 2 H(+). It carries out the reaction dimethylallyl diphosphate + 2 oxidized [2Fe-2S]-[ferredoxin] + H2O = (2E)-4-hydroxy-3-methylbut-2-enyl diphosphate + 2 reduced [2Fe-2S]-[ferredoxin] + 2 H(+). It functions in the pathway isoprenoid biosynthesis; dimethylallyl diphosphate biosynthesis; dimethylallyl diphosphate from (2E)-4-hydroxy-3-methylbutenyl diphosphate: step 1/1. Its pathway is isoprenoid biosynthesis; isopentenyl diphosphate biosynthesis via DXP pathway; isopentenyl diphosphate from 1-deoxy-D-xylulose 5-phosphate: step 6/6. Its function is as follows. Catalyzes the conversion of 1-hydroxy-2-methyl-2-(E)-butenyl 4-diphosphate (HMBPP) into a mixture of isopentenyl diphosphate (IPP) and dimethylallyl diphosphate (DMAPP). Acts in the terminal step of the DOXP/MEP pathway for isoprenoid precursor biosynthesis. This is 4-hydroxy-3-methylbut-2-enyl diphosphate reductase from Azotobacter vinelandii (strain DJ / ATCC BAA-1303).